Here is a 272-residue protein sequence, read N- to C-terminus: HMP-PP phosphatase (272 aa).

Residue D8 is the Nucleophile of the active site. Positions 8, 10, and 212 each coordinate Mg(2+).

It belongs to the HAD-like hydrolase superfamily. Cof family. It depends on Mg(2+) as a cofactor.

It catalyses the reaction 4-amino-2-methyl-5-(diphosphooxymethyl)pyrimidine + H2O = 4-amino-2-methyl-5-(phosphooxymethyl)pyrimidine + phosphate + H(+). In terms of biological role, catalyzes the hydrolysis of 4-amino-2-methyl-5-hydroxymethylpyrimidine pyrophosphate (HMP-PP) to 4-amino-2-methyl-5-hydroxymethylpyrimidine phosphate (HMP-P). The chain is HMP-PP phosphatase from Enterobacter sp. (strain 638).